Here is an 83-residue protein sequence, read N- to C-terminus: Cytochrome b559 subunit alpha (83 aa).

A helical transmembrane segment spans residues 21–35; it reads VIHSITIPSLFIAGW. Residue H23 coordinates heme.

It belongs to the PsbE/PsbF family. As to quaternary structure, heterodimer of an alpha subunit and a beta subunit. PSII is composed of 1 copy each of membrane proteins PsbA, PsbB, PsbC, PsbD, PsbE, PsbF, PsbH, PsbI, PsbJ, PsbK, PsbL, PsbM, PsbT, PsbX, PsbY, PsbZ, Psb30/Ycf12, at least 3 peripheral proteins of the oxygen-evolving complex and a large number of cofactors. It forms dimeric complexes. Heme b serves as cofactor.

Its subcellular location is the plastid. The protein resides in the chloroplast thylakoid membrane. In terms of biological role, this b-type cytochrome is tightly associated with the reaction center of photosystem II (PSII). PSII is a light-driven water:plastoquinone oxidoreductase that uses light energy to abstract electrons from H(2)O, generating O(2) and a proton gradient subsequently used for ATP formation. It consists of a core antenna complex that captures photons, and an electron transfer chain that converts photonic excitation into a charge separation. In Adiantum capillus-veneris (Maidenhair fern), this protein is Cytochrome b559 subunit alpha.